Reading from the N-terminus, the 606-residue chain is Aspartate--tRNA(Asp/Asn) ligase (606 aa).

E177 contacts L-aspartate. An aspartate region spans residues Q201–K204. An L-aspartate-binding site is contributed by R223. Residues R223–E225 and Q232 contribute to the ATP site. Position 461 (H461) interacts with L-aspartate. E499 serves as a coordination point for ATP. R506 is a binding site for L-aspartate. Residue G551–R554 coordinates ATP.

This sequence belongs to the class-II aminoacyl-tRNA synthetase family. Type 1 subfamily. As to quaternary structure, homodimer.

It is found in the cytoplasm. The enzyme catalyses tRNA(Asx) + L-aspartate + ATP = L-aspartyl-tRNA(Asx) + AMP + diphosphate. Its function is as follows. Aspartyl-tRNA synthetase with relaxed tRNA specificity since it is able to aspartylate not only its cognate tRNA(Asp) but also tRNA(Asn). Reaction proceeds in two steps: L-aspartate is first activated by ATP to form Asp-AMP and then transferred to the acceptor end of tRNA(Asp/Asn). The sequence is that of Aspartate--tRNA(Asp/Asn) ligase from Prochlorococcus marinus (strain MIT 9313).